A 442-amino-acid chain; its full sequence is NALCN channel auxiliary factor 2 (442 aa).

A helical transmembrane segment spans residues 42-62 (LASLLFFTVLLSNHLWLVSAG). N-linked (GlcNAc...) asparagine glycosylation is found at asparagine 77, asparagine 100, asparagine 171, asparagine 279, and asparagine 354. A helical transmembrane segment spans residues 406–426 (CVLVLMLLHTMASFSVVQNGV).

This sequence belongs to the NALF family.

It localises to the membrane. In terms of biological role, probable component of the NALCN channel complex, a channel that regulates the resting membrane potential and controls neuronal excitability. This chain is NALCN channel auxiliary factor 2 (nalf2), found in Xenopus tropicalis (Western clawed frog).